The primary structure comprises 555 residues: Formate--tetrahydrofolate ligase (555 aa).

Position 64–71 (64–71) interacts with ATP; that stretch reads TPAGEGKT.

It belongs to the formate--tetrahydrofolate ligase family.

The enzyme catalyses (6S)-5,6,7,8-tetrahydrofolate + formate + ATP = (6R)-10-formyltetrahydrofolate + ADP + phosphate. It functions in the pathway one-carbon metabolism; tetrahydrofolate interconversion. The chain is Formate--tetrahydrofolate ligase from Allorhizobium ampelinum (strain ATCC BAA-846 / DSM 112012 / S4) (Agrobacterium vitis (strain S4)).